Here is a 237-residue protein sequence, read N- to C-terminus: Bax inhibitor 1 (237 aa).

Residues 1 to 29 (MNIFDRKINFDALLKFSHITPSTQQHLKK) are Cytoplasmic-facing. Lys7 participates in a covalent cross-link: Glycyl lysine isopeptide (Lys-Gly) (interchain with G-Cter in ubiquitin). Residues 30–50 (VYASFALCMFVAAAGAYVHMV) form a helical membrane-spanning segment. Over 51 to 52 (TH) the chain is Lumenal. A helical transmembrane segment spans residues 53-73 (FIQAGLLSALGSLILMIWLMA). Topologically, residues 74-86 (TPHSHETEQKRLG) are cytoplasmic. The helical transmembrane segment at 87–107 (LLAGFAFLTGVGLGPALEFCI) threads the bilayer. Residues 108–112 (AVNPS) are Lumenal-facing. The helical transmembrane segment at 113–133 (ILPTAFMGTAMIFTCFTLSAL) threads the bilayer. The Cytoplasmic portion of the chain corresponds to 134 to 139 (YARRRS). Residues 140–160 (YLFLGGILMSALSLLLLSSLG) traverse the membrane as a helical segment. Residues 161–166 (NVFFGS) lie on the Lumenal side of the membrane. The chain crosses the membrane as a helical span at residues 167–187 (IWLFQANLYVGLVVMCGFVLF). Residues 188-206 (DTQLIIEKAEHGDQDYIWH) are Cytoplasmic-facing. Positions 207-227 (CIDLFLDFITVFRKLMMILAM) form an intramembrane region, helical. Residues 228–237 (NEKDKKKEKK) are Cytoplasmic-facing.

The protein belongs to the BI1 family. As to quaternary structure, interacts with BCL2 and BCL2L1. Interacts with ERN1. In terms of processing, ubiquitinated by BFAR, leading to proteasomal degradation. Highly abundant in testis.

The protein localises to the endoplasmic reticulum membrane. Functionally, endoplasmic reticulum (ER)-resident protein that confers cellular protection as an anti-apoptotic protein by limiting multiple stress-inducing pathways surrounding the endoplasmic reticulum and mitochondria. Inhibits the activities of the key sensor for the endoplasmic reticulum unfolded protein response IRE1alpha/ERN1 both directly and by blocking BAX/BAK binding. Modulates ER calcium homeostasis by acting as a calcium-leak channel. Negatively regulates autophagy and autophagosome formation, especially during periods of nutrient deprivation, and reduces cell survival during starvation. The polypeptide is Bax inhibitor 1 (TMBIM6) (Homo sapiens (Human)).